The primary structure comprises 276 residues: Diaminopimelate epimerase (276 aa).

Substrate contacts are provided by asparagine 13, glutamine 46, and asparagine 66. Cysteine 75 serves as the catalytic Proton donor. Residues 76–77 (GN), asparagine 159, asparagine 192, and 210–211 (ER) contribute to the substrate site. Cysteine 219 acts as the Proton acceptor in catalysis. 220–221 (GT) lines the substrate pocket.

Belongs to the diaminopimelate epimerase family. In terms of assembly, homodimer.

The protein resides in the cytoplasm. It catalyses the reaction (2S,6S)-2,6-diaminopimelate = meso-2,6-diaminopimelate. It participates in amino-acid biosynthesis; L-lysine biosynthesis via DAP pathway; DL-2,6-diaminopimelate from LL-2,6-diaminopimelate: step 1/1. Its function is as follows. Catalyzes the stereoinversion of LL-2,6-diaminopimelate (L,L-DAP) to meso-diaminopimelate (meso-DAP), a precursor of L-lysine and an essential component of the bacterial peptidoglycan. The sequence is that of Diaminopimelate epimerase from Chromobacterium violaceum (strain ATCC 12472 / DSM 30191 / JCM 1249 / CCUG 213 / NBRC 12614 / NCIMB 9131 / NCTC 9757 / MK).